The chain runs to 437 residues: GTPase Era, mitochondrial (437 aa).

The N-terminal 43 residues, 1 to 43, are a transit peptide targeting the mitochondrion; the sequence is MAAPSWRGARLVQSVLRVWQVGPHVARERVIPFSSLLGFQRRC. The region spanning 112-330 is the Era-type G domain; the sequence is RVLRVVLLGA…QYLLTQAQPG (219 aa). A G1 region spans residues 120–127; the sequence is GAPNAGKS. Residue 120-127 participates in GTP binding; it reads GAPNAGKS. Residues 146–150 form a G2 region; it reads HTTRC. Residues 167 to 170 form a G3 region; that stretch reads DTPG. GTP is bound at residue 167–171; the sequence is DTPGI. Ser173 is modified (phosphoserine). 236 to 239 contributes to the GTP binding site; sequence NKVD. The tract at residues 236 to 239 is G4; the sequence is NKVD. A disordered region spans residues 271-290; the sequence is HSHPGTHCPSPAVKDPNTQS. The segment at 308 to 310 is G5; the sequence is LSA. Residues 360–437 form the KH type-2 domain; the sequence is LPQEVPYNVQ…DIRLSVKLLK (78 aa).

Belongs to the TRAFAC class TrmE-Era-EngA-EngB-Septin-like GTPase superfamily. Era GTPase family.

Its subcellular location is the mitochondrion matrix. The protein resides in the mitochondrion inner membrane. Its function is as follows. Probable GTPase that plays a role in the mitochondrial ribosomal small subunit assembly. Specifically binds the 12S mitochondrial rRNA (12S mt-rRNA) to a 33 nucleotide section delineating the 3' terminal stem-loop region. May act as a chaperone that protects the 12S mt-rRNA on the 28S mitoribosomal subunit during ribosomal small subunit assembly. This Homo sapiens (Human) protein is GTPase Era, mitochondrial (ERAL1).